The chain runs to 445 residues: Xylose isomerase (445 aa).

Catalysis depends on residues His107 and Asp110. Positions 238, 274, 277, 302, 313, 315, and 345 each coordinate Mg(2+).

This sequence belongs to the xylose isomerase family. In terms of assembly, homotetramer. Requires Mg(2+) as cofactor.

It localises to the cytoplasm. The catalysed reaction is alpha-D-xylose = alpha-D-xylulofuranose. The polypeptide is Xylose isomerase (xylA) (Bacillus subtilis (strain 168)).